The following is a 252-amino-acid chain: Isoprenyl transferase (252 aa).

Residue Asp-32 is part of the active site. Asp-32 is a Mg(2+) binding site. Substrate contacts are provided by residues 33-36 (GNGR), Trp-37, Arg-45, His-49, and 77-79 (STE). Asn-80 (proton acceptor) is an active-site residue. Substrate is bound by residues Trp-81, Arg-83, Arg-200, and 206–208 (RLS). Glu-219 is a binding site for Mg(2+).

The protein belongs to the UPP synthase family. In terms of assembly, homodimer. It depends on Mg(2+) as a cofactor.

In terms of biological role, catalyzes the condensation of isopentenyl diphosphate (IPP) with allylic pyrophosphates generating different type of terpenoids. In Oceanobacillus iheyensis (strain DSM 14371 / CIP 107618 / JCM 11309 / KCTC 3954 / HTE831), this protein is Isoprenyl transferase.